Consider the following 235-residue polypeptide: Aspartate/glutamate leucyltransferase (235 aa).

Belongs to the R-transferase family. Bpt subfamily.

The protein resides in the cytoplasm. The enzyme catalyses N-terminal L-glutamyl-[protein] + L-leucyl-tRNA(Leu) = N-terminal L-leucyl-L-glutamyl-[protein] + tRNA(Leu) + H(+). It catalyses the reaction N-terminal L-aspartyl-[protein] + L-leucyl-tRNA(Leu) = N-terminal L-leucyl-L-aspartyl-[protein] + tRNA(Leu) + H(+). Its function is as follows. Functions in the N-end rule pathway of protein degradation where it conjugates Leu from its aminoacyl-tRNA to the N-termini of proteins containing an N-terminal aspartate or glutamate. This is Aspartate/glutamate leucyltransferase from Pseudomonas syringae pv. syringae (strain B728a).